We begin with the raw amino-acid sequence, 115 residues long: Ribonuclease P protein component (115 aa).

This sequence belongs to the RnpA family. Consists of a catalytic RNA component (M1 or rnpB) and a protein subunit.

It catalyses the reaction Endonucleolytic cleavage of RNA, removing 5'-extranucleotides from tRNA precursor.. Its function is as follows. RNaseP catalyzes the removal of the 5'-leader sequence from pre-tRNA to produce the mature 5'-terminus. It can also cleave other RNA substrates such as 4.5S RNA. The protein component plays an auxiliary but essential role in vivo by binding to the 5'-leader sequence and broadening the substrate specificity of the ribozyme. The sequence is that of Ribonuclease P protein component from Bacillus mycoides (strain KBAB4) (Bacillus weihenstephanensis).